Here is a 1334-residue protein sequence, read N- to C-terminus: Lysine-specific demethylase 3A-B (1334 aa).

3 disordered regions span residues 243-288, 352-382, and 514-533; these read DQND…KTSF, PGIQ…SQNL, and KPQE…VTYP. Basic and acidic residues predominate over residues 267-283; sequence TEVKQTRNEEVPSKDVT. The C6-type zinc finger occupies 684-709; sequence CDACDTTIFNLHWVCPKCGFGVCVDC. Positions 897–901 match the LXXLL motif motif; sequence LRNLL. One can recognise a JmjC domain in the interval 1089–1294; it reads RREGKLNLAA…HCFCLTQEFR (206 aa). 3 residues coordinate Fe cation: histidine 1133, aspartate 1135, and histidine 1262.

Belongs to the JHDM2 histone demethylase family. Fe(2+) serves as cofactor.

It localises to the cytoplasm. Its subcellular location is the nucleus. It carries out the reaction N(6),N(6)-dimethyl-L-lysyl(9)-[histone H3] + 2 2-oxoglutarate + 2 O2 = L-lysyl(9)-[histone H3] + 2 formaldehyde + 2 succinate + 2 CO2. Its function is as follows. Histone demethylase that specifically demethylates 'Lys-9' of histone H3, thereby playing a central role in histone code. Preferentially demethylates mono- and dimethylated H3 'Lys-9' residue, with a preference for dimethylated residue, while it has weak or no activity on trimethylated H3 'Lys-9'. Demethylation of Lys residue generates formaldehyde and succinate. In Xenopus laevis (African clawed frog), this protein is Lysine-specific demethylase 3A-B (kdm3a-b).